A 494-amino-acid polypeptide reads, in one-letter code: Cytochrome P450 2A5 (494 aa).

Ser131 carries the phosphoserine modification. Lys379 carries the post-translational modification N6-acetyllysine. Cys439 provides a ligand contact to heme.

It belongs to the cytochrome P450 family. Heme is required as a cofactor. In terms of tissue distribution, liver, with a strong circadian rhythmicity. Circadian expression is regulated by DBP.

It localises to the endoplasmic reticulum membrane. It is found in the microsome membrane. The catalysed reaction is an organic molecule + reduced [NADPH--hemoprotein reductase] + O2 = an alcohol + oxidized [NADPH--hemoprotein reductase] + H2O + H(+). Functionally, exhibits a high coumarin 7-hydroxylase activity. This Mus musculus (Mouse) protein is Cytochrome P450 2A5 (Cyp2a5).